We begin with the raw amino-acid sequence, 195 residues long: MKDKILKIVRTTKETDISAELKIYGEGRCEIATGVGFFDHMLEAFGKHALLDMKISCKGDTHVDFHHSVEDVGIVIGTLLKEAIYPVSGIERFGDSVVVMDEAAVSCALDLSNRAFLVYENFNEKGKVGEFDIELAEEFFRAVSMNANITLHIAKLRGRNNHHIIEAAFKSFAVALRRALAKNPRVNTPSTKGVL.

This sequence belongs to the imidazoleglycerol-phosphate dehydratase family.

The protein resides in the cytoplasm. It carries out the reaction D-erythro-1-(imidazol-4-yl)glycerol 3-phosphate = 3-(imidazol-4-yl)-2-oxopropyl phosphate + H2O. It functions in the pathway amino-acid biosynthesis; L-histidine biosynthesis; L-histidine from 5-phospho-alpha-D-ribose 1-diphosphate: step 6/9. This is Imidazoleglycerol-phosphate dehydratase from Campylobacter curvus (strain 525.92).